A 233-amino-acid chain; its full sequence is 5'-methylthioadenosine/S-adenosylhomocysteine nucleosidase (233 aa).

Catalysis depends on glutamate 12, which acts as the Proton acceptor. Substrate is bound by residues glycine 78, isoleucine 152, and 173-174 (ME). The Proton donor role is filled by aspartate 197.

It belongs to the PNP/UDP phosphorylase family. MtnN subfamily. As to quaternary structure, homodimer.

The enzyme catalyses S-adenosyl-L-homocysteine + H2O = S-(5-deoxy-D-ribos-5-yl)-L-homocysteine + adenine. The catalysed reaction is S-methyl-5'-thioadenosine + H2O = 5-(methylsulfanyl)-D-ribose + adenine. It catalyses the reaction 5'-deoxyadenosine + H2O = 5-deoxy-D-ribose + adenine. The protein operates within amino-acid biosynthesis; L-methionine biosynthesis via salvage pathway; S-methyl-5-thio-alpha-D-ribose 1-phosphate from S-methyl-5'-thioadenosine (hydrolase route): step 1/2. Catalyzes the irreversible cleavage of the glycosidic bond in both 5'-methylthioadenosine (MTA) and S-adenosylhomocysteine (SAH/AdoHcy) to adenine and the corresponding thioribose, 5'-methylthioribose and S-ribosylhomocysteine, respectively. Also cleaves 5'-deoxyadenosine, a toxic by-product of radical S-adenosylmethionine (SAM) enzymes, into 5-deoxyribose and adenine. Thus, is required for in vivo function of the radical SAM enzymes biotin synthase and lipoic acid synthase, that are inhibited by 5'-deoxyadenosine accumulation. The sequence is that of 5'-methylthioadenosine/S-adenosylhomocysteine nucleosidase from Yersinia pestis bv. Antiqua (strain Angola).